The following is a 425-amino-acid chain: cAMP/cGMP-dependent 3',5'-cAMP/cGMP phosphodiesterase 7 (425 aa).

The N-terminal stretch at 1–17 (MKYLILILIFFIEINNG) is a signal peptide.

Belongs to the cyclic nucleotide phosphodiesterase class-II family.

It is found in the secreted. The protein localises to the extracellular space. It localises to the cell surface. It catalyses the reaction 3',5'-cyclic AMP + H2O = AMP + H(+). It carries out the reaction 3',5'-cyclic GMP + H2O = GMP + H(+). With respect to regulation, inhibited by dithiotreitol (DTT). Functionally, phosphodiesterase with dual cAMP/cGMP specificity. However, displays a preference for cAMP over cGMP. Seems to regulate cAMP/cGMP concentration especially during cell aggregation. In Dictyostelium discoideum (Social amoeba), this protein is cAMP/cGMP-dependent 3',5'-cAMP/cGMP phosphodiesterase 7 (pde7).